The primary structure comprises 578 residues: Proline--tRNA ligase (578 aa).

This sequence belongs to the class-II aminoacyl-tRNA synthetase family. ProS type 1 subfamily. Homodimer.

It is found in the cytoplasm. The enzyme catalyses tRNA(Pro) + L-proline + ATP = L-prolyl-tRNA(Pro) + AMP + diphosphate. Its function is as follows. Catalyzes the attachment of proline to tRNA(Pro) in a two-step reaction: proline is first activated by ATP to form Pro-AMP and then transferred to the acceptor end of tRNA(Pro). As ProRS can inadvertently accommodate and process non-cognate amino acids such as alanine and cysteine, to avoid such errors it has two additional distinct editing activities against alanine. One activity is designated as 'pretransfer' editing and involves the tRNA(Pro)-independent hydrolysis of activated Ala-AMP. The other activity is designated 'posttransfer' editing and involves deacylation of mischarged Ala-tRNA(Pro). The misacylated Cys-tRNA(Pro) is not edited by ProRS. This chain is Proline--tRNA ligase, found in Burkholderia cenocepacia (strain ATCC BAA-245 / DSM 16553 / LMG 16656 / NCTC 13227 / J2315 / CF5610) (Burkholderia cepacia (strain J2315)).